Consider the following 251-residue polypeptide: Large ribosomal subunit protein uL3 (251 aa).

Disordered regions lie at residues 140 to 162 and 229 to 251; these read SHRSIGSTGGRQDPGKTFKNKKM and AAPAGAVQAAQAAPEAPAAEENA. The residue at position 151 (Gln-151) is an N5-methylglutamine.

It belongs to the universal ribosomal protein uL3 family. As to quaternary structure, part of the 50S ribosomal subunit. Forms a cluster with proteins L14 and L19. In terms of processing, methylated by PrmB.

In terms of biological role, one of the primary rRNA binding proteins, it binds directly near the 3'-end of the 23S rRNA, where it nucleates assembly of the 50S subunit. In Methylobacterium nodulans (strain LMG 21967 / CNCM I-2342 / ORS 2060), this protein is Large ribosomal subunit protein uL3.